A 218-amino-acid chain; its full sequence is 25.3 kDa vesicle transport protein SEC22-1 (218 aa).

Topologically, residues 1 to 192 (MVKMTLIARV…DKAKDLNRQA (192 aa)) are cytoplasmic. The 115-residue stretch at 6–120 (LIARVTDGLP…YAFIKFDTFI (115 aa)) folds into the Longin domain. A v-SNARE coiled-coil homology domain is found at 135–195 (NIAKLNDELY…KDLNRQALIR (61 aa)). A helical; Anchor for type IV membrane protein transmembrane segment spans residues 193-213 (LIRKWAPVAIVFGVVFLLFWV). Over 214 to 218 (KNKLW) the chain is Vesicular.

The protein belongs to the synaptobrevin family. Interacts with SEC24A. Mainly expressed in flowers and siliques, to a lower extent in seedlings, and barely in roots and leaves.

The protein localises to the golgi apparatus membrane. The protein resides in the endoplasmic reticulum membrane. In terms of biological role, V-SNARE involved in vesicle trafficking from the ER to the Golgi complex and required for early secretion. Involved in endoplasmic reticulum (ER) biogenesis and functions as well as for Golgi-stack integrity. Essential for gametophytes development. Involved in cesium Cs(+) accumulation, a non-essential cation. In Arabidopsis thaliana (Mouse-ear cress), this protein is 25.3 kDa vesicle transport protein SEC22-1.